Consider the following 307-residue polypeptide: Synaptophysin (307 aa).

Residues 1–19 (MDVVNQLVAGGQFRVVKEP) lie on the Cytoplasmic side of the membrane. In terms of domain architecture, MARVEL spans 15 to 222 (VVKEPLGFVK…NLWFVFKETG (208 aa)). The chain crosses the membrane as a helical span at residues 20-43 (LGFVKVLQWVFAIFAFATCGSYTG). Residues 44 to 101 (ELRLSVECANKTESALNIEVEFEYPFRLHQVYFDAPSCVKGGTTKIFLVGDYSSSAEF) are Vesicular-facing. N53 is a glycosylation site (N-linked (GlcNAc...) asparagine). Y75 bears the Phosphotyrosine mark. The chain crosses the membrane as a helical span at residues 102-125 (FVTVAVFAFLYSMGALATYIFLQN). Residues 126–132 (KYRENNK) are Cytoplasmic-facing. The chain crosses the membrane as a helical span at residues 133–156 (GPMMDFLATAVFAFMWLVSSSAWA). Over 157–194 (KGLSDVKMATDPENIIKEMPMCRQTGNTCKELRDPVTS) the chain is Vesicular. Residues 195–218 (GLNTSVVFGFLNLVLWVGNLWFVF) traverse the membrane as a helical segment. Over 219-307 (KETGWAAPFM…GAPTSFSNQM (89 aa)) the chain is Cytoplasmic. T221 carries the post-translational modification Phosphothreonine. The disordered stretch occupies residues 233–307 (GAPEKQPAPG…GAPTSFSNQM (75 aa)). Over residues 248 to 258 (AGYGQGPGGYG) the composition is skewed to gly residues. Residues 249-298 (GYGQGPGGYGPQDSYGPQGGYQPDYGQPASGGGGYGPQGDYGQQGYGQQG) are repeats, Gly-rich. Over residues 259-276 (PQDSYGPQGGYQPDYGQP) the composition is skewed to low complexity. Y273 and Y289 each carry phosphotyrosine. The segment covering 277 to 296 (ASGGGGYGPQGDYGQQGYGQ) has biased composition (gly residues).

The protein belongs to the synaptophysin/synaptobrevin family. Homohexamer or homotetramer. Interacts with SRCIN1. Interacts with VAMP2; the interaction is inhibited by interaction of VAPM2 with SEPT8. Post-translationally, ubiquitinated; mediated by SIAH1 or SIAH2 and leading to its subsequent proteasomal degradation. In terms of processing, phosphorylated by SRC. Expressed in the brain with expression in the cerebrum and the cerebellum.

The protein resides in the cytoplasmic vesicle. The protein localises to the secretory vesicle. It localises to the synaptic vesicle membrane. It is found in the synapse. Its subcellular location is the synaptosome. Functionally, possibly involved in structural functions as organizing other membrane components or in targeting the vesicles to the plasma membrane. Involved in the regulation of short-term and long-term synaptic plasticity. The protein is Synaptophysin (Syp) of Rattus norvegicus (Rat).